A 395-amino-acid chain; its full sequence is Chorismate synthase (395 aa).

Positions 40 and 46 each coordinate NADP(+). Residues 137–139, G308, 323–327, and R349 each bind FMN; these read RSS and KPLPT.

It belongs to the chorismate synthase family. Homotetramer. Requires FMNH2 as cofactor.

The catalysed reaction is 5-O-(1-carboxyvinyl)-3-phosphoshikimate = chorismate + phosphate. It functions in the pathway metabolic intermediate biosynthesis; chorismate biosynthesis; chorismate from D-erythrose 4-phosphate and phosphoenolpyruvate: step 7/7. Its function is as follows. Catalyzes the anti-1,4-elimination of the C-3 phosphate and the C-6 proR hydrogen from 5-enolpyruvylshikimate-3-phosphate (EPSP) to yield chorismate, which is the branch point compound that serves as the starting substrate for the three terminal pathways of aromatic amino acid biosynthesis. This reaction introduces a second double bond into the aromatic ring system. This chain is Chorismate synthase, found in Gloeobacter violaceus (strain ATCC 29082 / PCC 7421).